The sequence spans 202 residues: LexA repressor (202 aa).

The H-T-H motif DNA-binding region spans 28–48; that stretch reads RAEIAAQLGFRSPNAAEEHLK. Catalysis depends on for autocatalytic cleavage activity residues Ser119 and Lys156.

Belongs to the peptidase S24 family. Homodimer.

It carries out the reaction Hydrolysis of Ala-|-Gly bond in repressor LexA.. Functionally, represses a number of genes involved in the response to DNA damage (SOS response), including recA and lexA. Binds to the 16 bp palindromic sequence 5'-CTGTATATATATACAG-3'. In the presence of single-stranded DNA, RecA interacts with LexA causing an autocatalytic cleavage which disrupts the DNA-binding part of LexA, leading to derepression of the SOS regulon and eventually DNA repair. The protein is LexA repressor of Erwinia tasmaniensis (strain DSM 17950 / CFBP 7177 / CIP 109463 / NCPPB 4357 / Et1/99).